A 228-amino-acid chain; its full sequence is Histone H1-III (228 aa).

Positions 1–18 (MSDPAPEVASAVPVASPA) are enriched in low complexity. Disordered regions lie at residues 1–44 (MSDP…PPVS) and 98–228 (LQTK…AKKA). Residues 39 to 113 (THPPVSEMVV…GASGSFKLPA (75 aa)) form the H15 domain. A compositionally biased stretch (basic and acidic residues) spans 115-133 (AKKEKVAKTPKKAAGEKKP). Basic residues-rich tracts occupy residues 148 to 170 (SIAK…KSTK) and 178 to 209 (AAKK…KVAA). The segment covering 211-221 (KPAEKKPEAAK) has biased composition (basic and acidic residues).

This sequence belongs to the histone H1/H5 family.

It is found in the nucleus. It localises to the chromosome. Functionally, histones H1 are necessary for the condensation of nucleosome chains into higher-order structures. This chain is Histone H1-III, found in Glyptotendipes barbipes (Midge).